The chain runs to 95 residues: Aspartyl/glutamyl-tRNA(Asn/Gln) amidotransferase subunit C (95 aa).

Belongs to the GatC family. As to quaternary structure, heterotrimer of A, B and C subunits.

The enzyme catalyses L-glutamyl-tRNA(Gln) + L-glutamine + ATP + H2O = L-glutaminyl-tRNA(Gln) + L-glutamate + ADP + phosphate + H(+). It catalyses the reaction L-aspartyl-tRNA(Asn) + L-glutamine + ATP + H2O = L-asparaginyl-tRNA(Asn) + L-glutamate + ADP + phosphate + 2 H(+). Allows the formation of correctly charged Asn-tRNA(Asn) or Gln-tRNA(Gln) through the transamidation of misacylated Asp-tRNA(Asn) or Glu-tRNA(Gln) in organisms which lack either or both of asparaginyl-tRNA or glutaminyl-tRNA synthetases. The reaction takes place in the presence of glutamine and ATP through an activated phospho-Asp-tRNA(Asn) or phospho-Glu-tRNA(Gln). The polypeptide is Aspartyl/glutamyl-tRNA(Asn/Gln) amidotransferase subunit C (Caldanaerobacter subterraneus subsp. tengcongensis (strain DSM 15242 / JCM 11007 / NBRC 100824 / MB4) (Thermoanaerobacter tengcongensis)).